The following is a 359-amino-acid chain: 5-amino-6-(D-ribitylamino)uracil--L-tyrosine 4-hydroxyphenyl transferase (359 aa).

The 238-residue stretch at 45 to 282 folds into the Radical SAM core domain; that stretch reads VTYVLNANIN…VYAISRIFFK (238 aa). Cysteine 59, cysteine 63, and cysteine 66 together coordinate [4Fe-4S] cluster.

It belongs to the radical SAM superfamily. CofH family. In terms of assembly, consists of two subunits, CofG and CofH. [4Fe-4S] cluster serves as cofactor.

It carries out the reaction 5-amino-6-(D-ribitylamino)uracil + L-tyrosine + S-adenosyl-L-methionine = 5-amino-5-(4-hydroxybenzyl)-6-(D-ribitylimino)-5,6-dihydrouracil + 2-iminoacetate + 5'-deoxyadenosine + L-methionine + H(+). The protein operates within cofactor biosynthesis; coenzyme F0 biosynthesis. Functionally, catalyzes the radical-mediated synthesis of 5-amino-5-(4-hydroxybenzyl)-6-(D-ribitylimino)-5,6-dihydrouracil from 5-amino-6-(D-ribitylamino)uracil and L-tyrosine. This Methanococcus vannielii (strain ATCC 35089 / DSM 1224 / JCM 13029 / OCM 148 / SB) protein is 5-amino-6-(D-ribitylamino)uracil--L-tyrosine 4-hydroxyphenyl transferase.